We begin with the raw amino-acid sequence, 181 residues long: Crustacyanin-A1 subunit (181 aa).

3 disulfides stabilise this stretch: Cys12/Cys121, Cys51/Cys173, and Cys117/Cys150.

The protein belongs to the calycin superfamily. Lipocalin family. In terms of assembly, oligomer; Can form dimers (beta-crustacyanin); or complexes of 16 subunits (alpha-crustacyanin). There are five types of subunits: A1, A2, A3, C1 and C2. As to expression, found in the carapace.

The protein resides in the secreted. Its subcellular location is the extracellular space. Its function is as follows. Binds the carotenoid astaxanthin (AXT) which provides the blue coloration to the carapace of the lobster. The protein is Crustacyanin-A1 subunit of Homarus gammarus (European lobster).